The following is a 267-amino-acid chain: Orotidine 5'-phosphate decarboxylase (267 aa).

The active-site Proton donor is Lys93.

The protein belongs to the OMP decarboxylase family. Type 2 subfamily.

It catalyses the reaction orotidine 5'-phosphate + H(+) = UMP + CO2. Its pathway is pyrimidine metabolism; UMP biosynthesis via de novo pathway; UMP from orotate: step 2/2. This is Orotidine 5'-phosphate decarboxylase from Halobacterium salinarum (strain ATCC 29341 / DSM 671 / R1).